The sequence spans 104 residues: Protein SMALL AUXIN UP-REGULATED RNA 9 (104 aa).

The protein belongs to the ARG7 family. Interacts with and inhibits PP2C-D subfamily of type 2C phosphatases such as PP2C67/PP2C-D1. As to expression, expressed in etiolated hypocotyls, petioles, leaves and flowers.

Its subcellular location is the cell membrane. Its function is as follows. Provide a mechanistic link between auxin and plasma membrane H(+)-ATPases (PM H(+)-ATPases, e.g. AHA1 and AHA2), and triggers PM H(+)-ATPases activity by promoting phosphorylation of their C-terminal autoinhibitory domain as a result of PP2C-D subfamily of type 2C phosphatases inhibition, thus leading to the acidification of the apoplast and the facilitation of solutes and water uptake to drive cell expansion. Triggers plant growth probably by promoting cell elongation. Regulates branch angles and bending. Probably involved in light intensity mediated root development. This is Protein SMALL AUXIN UP-REGULATED RNA 9 from Arabidopsis thaliana (Mouse-ear cress).